Here is a 449-residue protein sequence, read N- to C-terminus: 23S rRNA (uracil(1939)-C(5))-methyltransferase RlmD (449 aa).

The 59-residue stretch at 12-70 (SKQLSAKQSFSVHQLDHLGAGIAQHQGKVVFIPGALPSETVQAQLTEQKKNYARAKLIK) folds into the TRAM domain. C83, C89, C92, and C170 together coordinate [4Fe-4S] cluster. Residues Q282, F311, N316, E332, D359, and D379 each contribute to the S-adenosyl-L-methionine site. C405 serves as the catalytic Nucleophile.

This sequence belongs to the class I-like SAM-binding methyltransferase superfamily. RNA M5U methyltransferase family. RlmD subfamily.

It carries out the reaction uridine(1939) in 23S rRNA + S-adenosyl-L-methionine = 5-methyluridine(1939) in 23S rRNA + S-adenosyl-L-homocysteine + H(+). Catalyzes the formation of 5-methyl-uridine at position 1939 (m5U1939) in 23S rRNA. The chain is 23S rRNA (uracil(1939)-C(5))-methyltransferase RlmD from Shewanella sp. (strain MR-7).